Here is a 264-residue protein sequence, read N- to C-terminus: Small ribosomal subunit protein uS3 (264 aa).

A KH type-2 domain is found at 39-107 (VREYLKKKLK…PVHVNIEEIR (69 aa)). Residues 214–264 (PVETAAPREEERRPRRAPRGDRPDGARNGRPGGGRGRAPRKADAAPAPEGE) are disordered. The span at 219–240 (APREEERRPRRAPRGDRPDGAR) shows a compositional bias: basic and acidic residues.

It belongs to the universal ribosomal protein uS3 family. Part of the 30S ribosomal subunit. Forms a tight complex with proteins S10 and S14.

Functionally, binds the lower part of the 30S subunit head. Binds mRNA in the 70S ribosome, positioning it for translation. In Bordetella avium (strain 197N), this protein is Small ribosomal subunit protein uS3.